Consider the following 296-residue polypeptide: Fructose-bisphosphate aldolase class 1 (296 aa).

Catalysis depends on E175, which acts as the Proton acceptor. Catalysis depends on K212, which acts as the Schiff-base intermediate with dihydroxyacetone-P.

Belongs to the class I fructose-bisphosphate aldolase family.

The catalysed reaction is beta-D-fructose 1,6-bisphosphate = D-glyceraldehyde 3-phosphate + dihydroxyacetone phosphate. The protein operates within carbohydrate degradation; glycolysis; D-glyceraldehyde 3-phosphate and glycerone phosphate from D-glucose: step 4/4. This Staphylococcus aureus (strain Mu3 / ATCC 700698) protein is Fructose-bisphosphate aldolase class 1.